The sequence spans 145 residues: MLKKSILPMSCGVLVMVMSGLLDAAEITLISHKTLGSQLRDGMKLATGRIACREPHDGFHIWINASQNGKVGHYIVQNNRETKHELKVKIGGGGWSSSLIEGQRGVYRQGEEKQAIFDIMSDGNQYSAPGEYIFSVSGECLISRG.

The signal sequence occupies residues 1–24 (MLKKSILPMSCGVLVMVMSGLLDA).

This sequence to E.coli AfaD.

This is Protein AggB (aggB) from Escherichia coli.